The sequence spans 499 residues: Serine/threonine-protein kinase RHS3 (499 aa).

Positions 1-92 are disordered; it reads MLLKPGNKLV…NSSKPHTGGD (92 aa). The span at 39-55 shows a compositional bias: basic and acidic residues; sequence QKQVEQNTKKIEEHQIK. Positions 63–85 are enriched in low complexity; sequence SNHNVNMSSQSNNSESTSTNNSS. One can recognise a Protein kinase domain in the interval 113–436; sequence FRVLKRLGYG…ATEIKQHPFF (324 aa). Residues 119–127 and Lys-144 each bind ATP; that span reads LGYGDIGSV. Asp-240 (proton acceptor) is an active-site residue. The AGC-kinase C-terminal domain occupies 437-499; sequence EGVNWALIRG…DPDYIVFEYF (63 aa).

This sequence belongs to the protein kinase superfamily. AGC Ser/Thr protein kinase family. In terms of assembly, interacts with PDPK1/PDK1. Autophosphorylated and phosphorylated by PDPK1/PDK1. As to expression, specifically expressed in root hair cells.

It carries out the reaction L-seryl-[protein] + ATP = O-phospho-L-seryl-[protein] + ADP + H(+). It catalyses the reaction L-threonyl-[protein] + ATP = O-phospho-L-threonyl-[protein] + ADP + H(+). Activated by PDPK1/PDK1. In terms of biological role, involved in root hair growth and morphogenesis. The chain is Serine/threonine-protein kinase RHS3 from Arabidopsis thaliana (Mouse-ear cress).